The primary structure comprises 424 residues: Set1 complex component spp1 (424 aa).

A disordered region spans residues 80-108; that stretch reads QQPTIPKKPPVSAHRRGPRKHRGNANSQL. Basic residues predominate over residues 92–102; sequence AHRRGPRKHRG. A PHD-type zinc finger spans residues 118–168; it reads PLYCICQKPDDGSWMLGCDGCEDWFHGTCVNIPESYNDLTVQYFCPKCTEE.

As to quaternary structure, component of the Set1 complex composed of ash2, sdc1, set1, shg1, spp1, swd1, swd2 and swd3.

Its subcellular location is the nucleus. In terms of biological role, the Set1 complex specifically methylates 'Lys-4' of histone H3. The polypeptide is Set1 complex component spp1 (spp1) (Schizosaccharomyces pombe (strain 972 / ATCC 24843) (Fission yeast)).